The chain runs to 499 residues: UTP--glucose-1-phosphate uridylyltransferase (499 aa).

At serine 2 the chain carries N-acetylserine. Serine 17 is modified (phosphoserine). Threonine 19 carries the phosphothreonine modification. 2 positions are modified to phosphoserine: serine 21 and serine 79. UTP contacts are provided by residues 109–112 (LNGG), lysine 123, glutamine 186, and glycine 215. 111–112 (GG) serves as a coordination point for substrate. A Mg(2+)-binding site is contributed by lysine 123. Substrate is bound by residues histidine 216 and 244–246 (NGD). Aspartate 246 is a UTP binding site. Aspartate 246 contacts Mg(2+). Arginine 369 carries the omega-N-methylarginine modification. Lysine 388 contacts UTP. Residue lysine 388 is part of the active site. An oligomerization region spans residues 448-499 (HLTITGNVFLGKDVTLRGTVIIVCSDGHKIDIPNGSILENVVVTGNLQILEH).

Belongs to the UDPGP type 1 family. Homooctamer.

The catalysed reaction is alpha-D-glucose 1-phosphate + UTP + H(+) = UDP-alpha-D-glucose + diphosphate. Plays a central role as a glucosyl donor in cellular metabolic pathways. The protein is UTP--glucose-1-phosphate uridylyltransferase of Saccharomyces cerevisiae (strain ATCC 204508 / S288c) (Baker's yeast).